Here is a 541-residue protein sequence, read N- to C-terminus: Carotenoid 9,10(9',10')-cleavage dioxygenase 1 (541 aa).

Positions 222, 270, 336, and 526 each coordinate Fe cation.

It belongs to the carotenoid oxygenase family. Fe(2+) is required as a cofactor.

The catalysed reaction is all-trans-zeaxanthin + 2 O2 = 4,9-dimethyldodeca-2,4,6,8,10-pentaenedial + 2 (3R)-hydroxy-beta-ionone. Functionally, cleaves a variety of carotenoids at the 9-10 and 9'-10' double bonds. Probably not involved in abscisic acid biosynthesis. This is Carotenoid 9,10(9',10')-cleavage dioxygenase 1 (CCD1) from Pisum sativum (Garden pea).